We begin with the raw amino-acid sequence, 222 residues long: Fibrillarin-like rRNA/tRNA 2'-O-methyltransferase (222 aa).

Residues 86 to 87 (TT), 104 to 105 (EV), 129 to 130 (DA), and 149 to 152 (DISQ) contribute to the S-adenosyl-L-methionine site.

It belongs to the methyltransferase superfamily. Fibrillarin family. As to quaternary structure, interacts with nop5. Component of box C/D small ribonucleoprotein (sRNP) particles that contain rpl7ae, FlpA and nop5, plus a guide RNA.

In terms of biological role, involved in pre-rRNA and tRNA processing. Utilizes the methyl donor S-adenosyl-L-methionine to catalyze the site-specific 2'-hydroxyl methylation of ribose moieties in rRNA and tRNA. Site specificity is provided by a guide RNA that base pairs with the substrate. Methylation occurs at a characteristic distance from the sequence involved in base pairing with the guide RNA. The chain is Fibrillarin-like rRNA/tRNA 2'-O-methyltransferase from Thermoplasma volcanium (strain ATCC 51530 / DSM 4299 / JCM 9571 / NBRC 15438 / GSS1).